The chain runs to 259 residues: Proteasome subunit alpha (259 aa).

The protein belongs to the peptidase T1A family. In terms of assembly, the 20S proteasome core is composed of 14 alpha and 14 beta subunits that assemble into four stacked heptameric rings, resulting in a barrel-shaped structure. The two inner rings, each composed of seven catalytic beta subunits, are sandwiched by two outer rings, each composed of seven alpha subunits. The catalytic chamber with the active sites is on the inside of the barrel. Has a gated structure, the ends of the cylinder being occluded by the N-termini of the alpha-subunits. Is capped at one or both ends by the proteasome regulatory ATPase, PAN.

Its subcellular location is the cytoplasm. With respect to regulation, the formation of the proteasomal ATPase PAN-20S proteasome complex, via the docking of the C-termini of PAN into the intersubunit pockets in the alpha-rings, triggers opening of the gate for substrate entry. Interconversion between the open-gate and close-gate conformations leads to a dynamic regulation of the 20S proteasome proteolysis activity. In terms of biological role, component of the proteasome core, a large protease complex with broad specificity involved in protein degradation. The protein is Proteasome subunit alpha of Methanococcus maripaludis (strain C6 / ATCC BAA-1332).